The following is a 238-amino-acid chain: Endothelin-3 (238 aa).

Residues 1-16 (MEPGLWLLFGLTVTSA) form the signal peptide. Residues 17–94 (AGFVPCSQSG…AEGAPEHHRS (78 aa)) constitute a propeptide that is removed on maturation. Residues 24-89 (QSGDAGRRGV…GQEQAAEGAP (66 aa)) are disordered. Intrachain disulfides connect Cys-97/Cys-111 and Cys-99/Cys-107. Residues 118-238 (INTPEQTVPY…PRCLFQEGAP (121 aa)) constitute a propeptide that is removed on maturation. The interval 159–173 (CACVGRYDKACLHFC) is endothelin-like. Residues 183-219 (SRTAEKTDKEEEGKVEVKDQQSKQALDLHHPKLMPGS) are disordered. Positions 185–212 (TAEKTDKEEEGKVEVKDQQSKQALDLHH) are enriched in basic and acidic residues.

It belongs to the endothelin/sarafotoxin family. Expressed in trophoblasts and placental stem villi vessels, but not in cultured placental smooth muscle cells.

It localises to the secreted. Endothelins are endothelium-derived vasoconstrictor peptides. This chain is Endothelin-3 (EDN3), found in Homo sapiens (Human).